A 663-amino-acid chain; its full sequence is Probable peptidyl-glycine alpha-amidating monooxygenase pamn-1 (663 aa).

The first 21 residues, 1 to 21 (MNDRISINLIYLVLTFCCVSA), serve as a signal peptide directing secretion. Residues 1–300 (MNDRISINLI…YDAKLDNPYP (300 aa)) form a peptidylglycine alpha-hydroxylating monooxygenase region. H75 and H76 together coordinate Cu(2+). Residues C82 and C98 are joined by a disulfide bond. H142 provides a ligand contact to Cu(2+). Residue N191 is glycosylated (N-linked (GlcNAc...) asparagine). Disulfide bonds link C194–C305 and C261–C283. Residues H210 and H212 each contribute to the Cu(2+) site. N-linked (GlcNAc...) asparagine glycosylation occurs at N269. Residue M282 participates in Cu(2+) binding. The segment at 301–663 (QGAICAKDYP…WQFKIRHDQN (363 aa)) is peptidyl-alpha-hydroxyglycine alpha-amidating lyase. A protein is bound at residue R376. N411 is a glycosylation site (N-linked (GlcNAc...) asparagine). NHL repeat units follow at residues 411–454 (NQTK…WKIE), 464–507 (SGEL…LDLN), 511–554 (IRQF…MTTQ), and 626–656 (FGQPHCLRVCPDGGHIFVGDIAEGKARLWQF). The cysteines at positions 478 and 497 are disulfide-linked. Positions 496 and 543 each coordinate a protein.

It in the C-terminal section; belongs to the peptidyl-alpha-hydroxyglycine alpha-amidating lyase family. This sequence in the N-terminal section; belongs to the copper type II ascorbate-dependent monooxygenase family. Monomer. Zn(2+) serves as cofactor. It depends on Cu(2+) as a cofactor.

The protein localises to the secreted. It carries out the reaction a [peptide]-C-terminal glycine + 2 L-ascorbate + O2 = a [peptide]-C-terminal (2S)-2-hydroxyglycine + 2 monodehydro-L-ascorbate radical + H2O. It catalyses the reaction a [peptide]-C-terminal (2S)-2-hydroxyglycine = a [peptide]-C-terminal amide + glyoxylate. Its function is as follows. Probable bifunctional enzyme that catalyzes 2 sequential steps in C-terminal alpha-amidation of peptides. The monooxygenase part produces an unstable peptidyl(2-hydroxyglycine) intermediate that is dismutated to glyoxylate and the corresponding desglycine peptide amide by the lyase part. C-terminal amidation of peptides such as neuropeptides is essential for full biological activity. The chain is Probable peptidyl-glycine alpha-amidating monooxygenase pamn-1 from Caenorhabditis elegans.